We begin with the raw amino-acid sequence, 1558 residues long: Eukaryotic translation initiation factor 2-alpha kinase 1 (1558 aa).

In terms of domain architecture, Protein kinase spans 429 to 789 (FFEEKILGCG…AYNLLHESVL (361 aa)). Residues 435 to 443 (LGCGGFGYV) and lysine 458 contribute to the ATP site. Aspartate 660 functions as the Proton acceptor in the catalytic mechanism. Residues 1014–1033 (GTSTNNNNNNNNNNMGNNNI) are disordered.

This sequence belongs to the protein kinase superfamily. Ser/Thr protein kinase family. GCN2 subfamily. Post-translationally, auto-phosphorylated.

It catalyses the reaction L-seryl-[protein] + ATP = O-phospho-L-seryl-[protein] + ADP + H(+). The enzyme catalyses L-threonyl-[protein] + ATP = O-phospho-L-threonyl-[protein] + ADP + H(+). Functionally, in blood stage parasites, phosphorylates translation factor eIF2alpha in response to amino acid starvation. During the asexual blood stage, involved in the response to the host hormone melatonin which is used by the parasite to modulate its cell cycle. The chain is Eukaryotic translation initiation factor 2-alpha kinase 1 from Plasmodium falciparum (isolate 3D7).